A 263-amino-acid polypeptide reads, in one-letter code: Esterase mokD (263 aa).

Active-site charge relay system residues include Ser-134, Asp-208, and His-236.

Belongs to the LovG family.

It carries out the reaction dihydromonacolin L-[lovastatin nonaketide synthase] + H2O = holo-[lovastatin nonaketide synthase] + dihydromonacolin L carboxylate + H(+). The protein operates within polyketide biosynthesis; lovastatin biosynthesis. In terms of biological role, esterase; part of the gene cluster that mediates the biosynthesis of monakolin K, also known as lovastatin, and which acts as a potent competitive inhibitor of HMG-CoA reductase. Monakolin K biosynthesis is performed in two stages. The first stage is catalyzed by the nonaketide synthase mokA, which belongs to type I polyketide synthases and catalyzes the iterative nine-step formation of the polyketide. This PKS stage completed by the action of dehydrogenase mokE, which catalyzes the NADPH-dependent reduction of the unsaturated tetra-, penta- and heptaketide intermediates that arise during the mokA-mediated biosynthesis of the nonaketide chain and leads to dihydromonacolin L. Covalently bound dihydromonacolin L is released from mokA by the mokD esterase. Conversion of dihydromonacolin L into monacolin L and then monacolin J is subsequently performed with the participation of molecular oxygen and P450 monoogygenase mokC. Finally, mokF performs the conversion of monacoline J to monacoline K through the addition of the side-chain diketide moiety (2R)-2-methylbutanoate produced by the diketide synthase mokB. In Monascus pilosus (Red mold), this protein is Esterase mokD.